A 1065-amino-acid polypeptide reads, in one-letter code: MRPELVAVLDRYFSEIISCFFLGWLLNFLLVWFCSTKSTFLLWSVFLYICYYILRIEFAYIVAPFLKTIYTNSSQYHTVDWAYAYTALPKGLWEQITDYNYCYNFPPPRVEGFVSDFSPRFTLKELEIMNEANITPVHTIPKDTLLKRASDYKLAVESKKSILPRVQDLYEMDKWHNLRSKLSKNAPSYVTTSEIAVGAMSGAGNTKLAIPVVEKYTEEVADDRLPDRVRAKADQIMVAAIELVADGFASVNSDVTMAGALYDKRHKTIASSFKGAFASRASGVPSHVIYFPMHRVPACDDPNTTLELSMVSRDSDFDEGYTLANISARTLYVRAKGPEKVTETRHLLKAKTEDVVKARQFASEAQVVFATPRLFPEVNLDNYNLPGPSNAQQTEAITTDRGILFPKPKFKGNEVVLNYTGSGKIRNVGSQRFETKKNATGEQFVRSVDDLGCLSDEDGKDYRYGQGLMEEDVLNVQTNNFAIESATETMRLLFSGYASIPLNVIPGTKITVAYLNELSKHSAVHTGLLNMLSKIPGSLKVKINCQVAPTCGIGLAVSYVEGNESANLGSSLGRLLGIQHYKWNPAIEPYVEFVFKPFSCADWWNMHYLGSFKFAPVVVIQTLSKWLNAPKVDARISFAIYYEPTVVLPKQIATLEHAPAFMFRKEVGTLAFKQGERVAYSFEVNLGKPQTDGKEVTSTFASSYCGLSQYMQSDVILDFTLMSSPMIGGTFSIAYVAGAYIEKVGNMQILDSLPHIDFTFSSGSKSTRSVRFPKEVFGVYQALDRWDLDSARGDDVSGNFVLYQRDAVSSALEGELTFRIAARLSGDISFTGVSAGYPTTITRIGKGKTIGRSLDPEIRKPLRYMLGQAHATPKDFSSVRFVMGHWKYRAGLYPGSKSDEDIHPFSLKMRLDGSKSSENFEIIHSPFVRLLQNCAWMRGTLRFYVVARASSDYMSYRRTSQLTVSAHENSLSSNQFYSGVLTSPSGELSFSREVVGPVDGFASMGWNVRGSKKFYKIHVEMGNVHEYDTVVLYGQFDSNVEFAGQRKGGHYLLEKETPIFKTIKY.

As to quaternary structure, interacts with the large capsid protein. Interacts with the movement protein (via C-terminus). In terms of assembly, interacts with the small capsid protein. Homomultimer; assembles as pentons. Interacts (via C-terminus) with the small capsid protein. Specific enzymatic cleavages by picornain 3C-like protease in vivo yield mature proteins.

The protein localises to the host endoplasmic reticulum. It localises to the host cell junction. It is found in the host plasmodesma. The protein resides in the virion. In terms of biological role, acts as a suppressor of post-transcriptional gene silencing (PTGS), a mechanism of plant viral defense that limits the accumulation of viral RNAs. Binds ssRNA. Transports the viral genome to neighboring plant cells directly through plasmosdesmata, without any budding. The movement protein allows efficient cell to cell propagation, by bypassing the host cell wall barrier. Acts by forming a tubular structure at the host plasmodesmata, enlarging it enough to allow free passage of virion capsids. Binds to GTP and to single-stranded RNA and single-stranded DNA in a non-sequence-specific manner. Also acts as a suppressor of post-transcriptional gene silencing (PTGS), a mechanism of plant viral defense that limits the accumulation of viral RNAs. Functionally, together with the small capsid protein, forms an icosahedral capsid (T=3) enclosing the viral positive strand RNA genome, with a diameter of approximately 300 Angstroms. The large capsid protein interacts with the viral RNA. Also acts as a suppressor of post-transcriptional gene silencing (PTGS), a mechanism of plant viral defense that limits the accumulation of viral RNAs. Binds ssRNA. Its function is as follows. Together with the large capsid protein, forms an icosahedral capsid (T=3) enclosing the viral positive strand RNA genome, with a diameter of approximately 300 Angstroms. The capsid is formed from 60 copies each of the large and the small capsid protein. The small capsid protein forms the turrets at the fivefold axes of the viral particle. This is RNA2 polyprotein from Broad bean wilt virus 2 (BBWV-2).